We begin with the raw amino-acid sequence, 326 residues long: Vitamin B12 import system permease protein BtuC (326 aa).

Transmembrane regions (helical) follow at residues 15 to 35, 61 to 81, 88 to 108, 112 to 132, 146 to 166, 184 to 204, 240 to 260, 274 to 294, and 302 to 322; these read WLLC…CAGE, LAVL…QALF, PGLL…VLLG, LPNW…TLIL, LLAG…AIYF, GGVD…LLWI, GWMV…GLVI, VLLP…DIVA, and ELPI…WLLL.

The protein belongs to the binding-protein-dependent transport system permease family. FecCD subfamily. In terms of assembly, the complex is composed of two ATP-binding proteins (BtuD), two transmembrane proteins (BtuC) and a solute-binding protein (BtuF).

It is found in the cell inner membrane. Functionally, part of the ABC transporter complex BtuCDF involved in vitamin B12 import. Involved in the translocation of the substrate across the membrane. The chain is Vitamin B12 import system permease protein BtuC from Shigella sonnei (strain Ss046).